A 178-amino-acid polypeptide reads, in one-letter code: Putative magnesium-dependent phosphatase YER134C (178 aa).

The Nucleophile role is filled by aspartate 11. Aspartate 11 is a binding site for Mg(2+). Phosphate is bound by residues leucine 12, aspartate 13, serine 74, and arginine 75. Aspartate 13 serves as a coordination point for Mg(2+). The Proton donor role is filled by aspartate 13. Position 75 (arginine 75) interacts with substrate. Aspartate 141 contributes to the Mg(2+) binding site.

Belongs to the HAD-like hydrolase superfamily.

The protein localises to the cytoplasm. The protein resides in the nucleus. The catalysed reaction is O-phospho-L-tyrosyl-[protein] + H2O = L-tyrosyl-[protein] + phosphate. In terms of biological role, magnesium-dependent phosphatase which may act as a tyrosine phosphatase. The protein is Putative magnesium-dependent phosphatase YER134C of Saccharomyces cerevisiae (strain ATCC 204508 / S288c) (Baker's yeast).